We begin with the raw amino-acid sequence, 911 residues long: Protein translocase subunit SecA (911 aa).

Residues Q87, 105 to 109, and D512 each bind ATP; that span reads GEGKT. Positions 861 to 880 are disordered; that stretch reads APGLGSEQLSEEGAEVAVAS. C895, C897, C906, and H907 together coordinate Zn(2+).

This sequence belongs to the SecA family. As to quaternary structure, monomer and homodimer. Part of the essential Sec protein translocation apparatus which comprises SecA, SecYEG and auxiliary proteins SecDF-YajC and YidC. The cofactor is Zn(2+).

It localises to the cell inner membrane. The protein resides in the cytoplasm. It catalyses the reaction ATP + H2O + cellular proteinSide 1 = ADP + phosphate + cellular proteinSide 2.. In terms of biological role, part of the Sec protein translocase complex. Interacts with the SecYEG preprotein conducting channel. Has a central role in coupling the hydrolysis of ATP to the transfer of proteins into and across the cell membrane, serving both as a receptor for the preprotein-SecB complex and as an ATP-driven molecular motor driving the stepwise translocation of polypeptide chains across the membrane. The polypeptide is Protein translocase subunit SecA (Pseudomonas putida (strain ATCC 47054 / DSM 6125 / CFBP 8728 / NCIMB 11950 / KT2440)).